A 327-amino-acid polypeptide reads, in one-letter code: Ribosomal RNA large subunit methyltransferase F (327 aa).

Belongs to the methyltransferase superfamily. METTL16/RlmF family.

The protein resides in the cytoplasm. It catalyses the reaction adenosine(1618) in 23S rRNA + S-adenosyl-L-methionine = N(6)-methyladenosine(1618) in 23S rRNA + S-adenosyl-L-homocysteine + H(+). Specifically methylates the adenine in position 1618 of 23S rRNA. This chain is Ribosomal RNA large subunit methyltransferase F, found in Marinomonas sp. (strain MWYL1).